The following is a 224-amino-acid chain: Orotate phosphoribosyltransferase (224 aa).

5-phospho-alpha-D-ribose 1-diphosphate is bound by residues lysine 26, 73-74 (YK), arginine 100, lysine 101, lysine 104, histidine 106, and 127-135 (EDVTTSGKS). Orotate is bound by residues threonine 131 and arginine 160.

Belongs to the purine/pyrimidine phosphoribosyltransferase family. PyrE subfamily. In terms of assembly, homodimer. Mg(2+) serves as cofactor.

The enzyme catalyses orotidine 5'-phosphate + diphosphate = orotate + 5-phospho-alpha-D-ribose 1-diphosphate. The protein operates within pyrimidine metabolism; UMP biosynthesis via de novo pathway; UMP from orotate: step 1/2. In terms of biological role, catalyzes the transfer of a ribosyl phosphate group from 5-phosphoribose 1-diphosphate to orotate, leading to the formation of orotidine monophosphate (OMP). The protein is Orotate phosphoribosyltransferase of Clostridium botulinum (strain Alaska E43 / Type E3).